The primary structure comprises 703 residues: Serotransferrin (703 aa).

The N-terminal stretch at 1–19 is a signal peptide; that stretch reads MDLSLHVALCLGMLALCLA. 2 Transferrin-like domains span residues 27–341 and 354–686; these read VRWC…ALKE and VRWC…SLNK. 2 disulfides stabilise this stretch: cysteine 30-cysteine 65 and cysteine 40-cysteine 56. Aspartate 80 and tyrosine 112 together coordinate Fe(3+). Disulfide bonds link cysteine 135-cysteine 218, cysteine 180-cysteine 193, and cysteine 246-cysteine 260. Threonine 137, lysine 141, alanine 143, and glycine 144 together coordinate hydrogencarbonate. Tyrosine 212 contacts Fe(3+). Histidine 268 serves as a coordination point for Fe(3+). Residues 341–350 are connecting region; sequence EGVKEDDLAA. Intrachain disulfides connect cysteine 357-cysteine 389 and cysteine 367-cysteine 380. Fe(3+) is bound by residues aspartate 404 and tyrosine 443. Intrachain disulfides connect cysteine 414–cysteine 698, cysteine 432–cysteine 659, cysteine 466–cysteine 545, cysteine 490–cysteine 687, cysteine 500–cysteine 514, cysteine 511–cysteine 528, and cysteine 585–cysteine 599. Residues threonine 468, arginine 472, alanine 474, and glycine 475 each coordinate hydrogencarbonate. Position 539 (tyrosine 539) interacts with Fe(3+). Histidine 607 contributes to the Fe(3+) binding site.

Belongs to the transferrin family. In terms of assembly, monomer. In terms of tissue distribution, plasma.

It localises to the secreted. Transferrins are iron binding transport proteins which can bind two Fe(3+) ions in association with the binding of an anion, usually bicarbonate. It is responsible for the transport of iron from sites of absorption and heme degradation to those of storage and utilization. Serum transferrin may also have a further role in stimulating cell proliferation. This chain is Serotransferrin (tf), found in Xenopus tropicalis (Western clawed frog).